The following is a 60-amino-acid chain: Acidic phospholipase A2 (60 aa).

3 residues coordinate Ca(2+): Tyr27, Gly29, and Gly31. Cys28 and Cys44 are oxidised to a cystine. The active site involves His47. Residue Asp48 participates in Ca(2+) binding.

This sequence belongs to the phospholipase A2 family. Group II subfamily. D49 sub-subfamily. In terms of assembly, monomer. Ca(2+) serves as cofactor. In terms of tissue distribution, expressed by the venom gland.

The protein resides in the secreted. It carries out the reaction a 1,2-diacyl-sn-glycero-3-phosphocholine + H2O = a 1-acyl-sn-glycero-3-phosphocholine + a fatty acid + H(+). Snake venom phospholipase A2 (PLA2) that exhibits an indirect hemolytic activity, a low myotoxicity, and induces edema. In addition, this enzyme has been shown to induce the release of some pro- and anti-inflammatory cytokines from human PBMC (IL12B, TNF-alpha, IL1B and IL6 but not variation has been observed for IL-8 and IL-10). PLA2 catalyzes the calcium-dependent hydrolysis of the 2-acyl groups in 3-sn-phosphoglycerides. In Bothrops leucurus (Whitetail lancehead), this protein is Acidic phospholipase A2.